Here is an 811-residue protein sequence, read N- to C-terminus: Probable potassium transporter 16 (811 aa).

The Cytoplasmic segment spans residues 1–66; it reads MAQQQAGARG…GQESWMRTLR (66 aa). The helical transmembrane segment at 67 to 87 threads the bilayer; sequence LGFQCVGILHADLGTSPLYVY. The Extracellular portion of the chain corresponds to 88-100; sequence QNTFKYGIKHEDD. A helical membrane pass occupies residues 101–121; it reads IIGVLSLIIYSFVLFTMVKIV. At 122–190 the chain is on the cytoplasmic side; sequence FIALHANDDG…KSQLEKKPAK (69 aa). A helical transmembrane segment spans residues 191–211; it reads IAVFFLTIFATALAISDCVLN. At 212–228 the chain is on the extracellular side; sequence PSVSVLSAVNGLKLRAP. A helical transmembrane segment spans residues 229-249; the sequence is HLTTDEVVWITVGILVVFFAV. Topologically, residues 250 to 256 are cytoplasmic; the sequence is QRFGTDK. The helical transmembrane segment at 257–277 threads the bilayer; it reads IGYTFAPVVVVWLLLISGIGI. The Extracellular portion of the chain corresponds to 278-310; it reads YDLVKYDVGVLRAFNPKYIIDYFRRNKKDGWVQ. The helical transmembrane segment at 311–331 threads the bilayer; sequence LGEVLLTFTGTEALFADLGYF. Residues 332–337 are Cytoplasmic-facing; the sequence is SIKSIQ. A helical transmembrane segment spans residues 338–358; sequence LSSTFVLLPSVLCTYIGQAAY. Residues 359–379 are Extracellular-facing; sequence LRKHMDQQHIQNAFFNSIPRP. Residues 380–400 form a helical membrane-spanning segment; that stretch reads LFWPMFVLAIMTSVIGCQAMV. At 401–438 the chain is on the cytoplasmic side; it reads SCAFATMSHLQTLNCFPRIKILHTSRRYSGQLYSPEVN. The chain crosses the membrane as a helical span at residues 439 to 459; the sequence is FFLCLLSCVITLSFRTTGFIV. At 460–463 the chain is on the extracellular side; that stretch reads KAHE. The helical transmembrane segment at 464–484 threads the bilayer; the sequence is ICVVLVMVITTILMTIVMLLV. The Cytoplasmic portion of the chain corresponds to 485-488; the sequence is WKVN. A helical membrane pass occupies residues 489–509; that stretch reads IWWIVLFFVVFMSTETVYLSA. Residues 510–519 are Extracellular-facing; sequence VLYKFTKGPY. Residues 520–540 form a helical membrane-spanning segment; sequence MPLAMSAVLMVIMFVWHYVHV. Over 541–811 the chain is Cytoplasmic; the sequence is KRYKFELEHT…LLKVGITYEI (271 aa).

The protein belongs to the HAK/KUP transporter (TC 2.A.72.3) family.

The protein localises to the membrane. Functionally, high-affinity potassium transporter. This is Probable potassium transporter 16 (HAK16) from Oryza sativa subsp. japonica (Rice).